The sequence spans 671 residues: Archaeal Rqc2 homolog aRqcH (671 aa).

Coiled-coil stretches lie at residues 291-363 (KVVV…ARIK) and 410-465 (RKNA…MQMK).

The protein belongs to the NEMF family. As to quaternary structure, associates with stalled 50S ribosomal subunits.

Its function is as follows. Probably part of the ribosome quality control system (RQC). May mediate the addition of alanine residues (Ala tailing) to incompletely synthesized nascent chains from stalled ribosomes, leading to their degradation. In Methanocaldococcus jannaschii (strain ATCC 43067 / DSM 2661 / JAL-1 / JCM 10045 / NBRC 100440) (Methanococcus jannaschii), this protein is Archaeal Rqc2 homolog aRqcH.